Reading from the N-terminus, the 704-residue chain is Polyribonucleotide nucleotidyltransferase (704 aa).

The Mg(2+) site is built by D487 and D493. The region spanning P554–I613 is the KH domain. Residues G623 to K691 form the S1 motif domain.

This sequence belongs to the polyribonucleotide nucleotidyltransferase family. As to quaternary structure, component of the RNA degradosome, which is a multiprotein complex involved in RNA processing and mRNA degradation. Requires Mg(2+) as cofactor.

It is found in the cytoplasm. The enzyme catalyses RNA(n+1) + phosphate = RNA(n) + a ribonucleoside 5'-diphosphate. Involved in mRNA degradation. Catalyzes the phosphorolysis of single-stranded polyribonucleotides processively in the 3'- to 5'-direction. This chain is Polyribonucleotide nucleotidyltransferase, found in Xanthomonas campestris pv. campestris (strain 8004).